The primary structure comprises 204 residues: High frequency lysogenization protein HflD homolog (204 aa).

Belongs to the HflD family.

The protein resides in the cytoplasm. It is found in the cell inner membrane. The chain is High frequency lysogenization protein HflD homolog from Shewanella woodyi (strain ATCC 51908 / MS32).